We begin with the raw amino-acid sequence, 348 residues long: Dihydroorotase (348 aa).

Positions 17 and 19 each coordinate Zn(2+). Substrate-binding positions include 19 to 21 (HLR) and Asn45. Zn(2+) contacts are provided by Lys103, His140, and His178. The residue at position 103 (Lys103) is an N6-carboxylysine. A substrate-binding site is contributed by His140. A substrate-binding site is contributed by Leu223. Residue Asp251 participates in Zn(2+) binding. Asp251 is an active-site residue. Residues His255 and Ala267 each coordinate substrate.

It belongs to the metallo-dependent hydrolases superfamily. DHOase family. Class II DHOase subfamily. In terms of assembly, homodimer. Zn(2+) is required as a cofactor.

The catalysed reaction is (S)-dihydroorotate + H2O = N-carbamoyl-L-aspartate + H(+). Its pathway is pyrimidine metabolism; UMP biosynthesis via de novo pathway; (S)-dihydroorotate from bicarbonate: step 3/3. Its function is as follows. Catalyzes the reversible cyclization of carbamoyl aspartate to dihydroorotate. This chain is Dihydroorotase, found in Klebsiella pneumoniae (strain 342).